The primary structure comprises 308 residues: MAPVAAPSTSQPAGGKPMNWADEFDEPVVGDAPRIEERDEGNGVKVVIEYRTNPDGKKIKITRRVKRTLVKTKVNHEVAERKTWTKFGQEKGKAAGPHSATTTIGENVVLKMSAGNKTAEPEVDDMDKMRQQLANKRIVCRLCKGDHFTTKCPYKDTLEAIPGAGADTPEGGDGSMTPLAGMDPTNPAVAASAGGKYVPPSMRGGAKGPGEKMGGLGGMSRDDLPTLRVTNLSEDADDDDLRELFMRFGRVVRVYVGRDRETGICKGYAFVSFENREDADRARQKVDGRGYDNLILSCQWSLPRGERP.

The tract at residues 1-23 (MAPVAAPSTSQPAGGKPMNWADE) is disordered. Residues 225–303 (PTLRVTNLSE…LILSCQWSLP (79 aa)) enclose the RRM domain.

It belongs to the eIF-3 subunit G family. In terms of assembly, component of the eukaryotic translation initiation factor 3 (eIF-3) complex.

The protein resides in the cytoplasm. In terms of biological role, RNA-binding component of the eukaryotic translation initiation factor 3 (eIF-3) complex, which is involved in protein synthesis of a specialized repertoire of mRNAs and, together with other initiation factors, stimulates binding of mRNA and methionyl-tRNAi to the 40S ribosome. The eIF-3 complex specifically targets and initiates translation of a subset of mRNAs involved in cell proliferation. This subunit can bind 18S rRNA. The polypeptide is Eukaryotic translation initiation factor 3 subunit G (Mycosarcoma maydis (Corn smut fungus)).